A 30-amino-acid polypeptide reads, in one-letter code: U1-poneritoxin-Ni3a (30 aa).

It belongs to the ponericin-G family. In terms of tissue distribution, expressed by the venom gland.

The protein resides in the secreted. Its function is as follows. Shows a broad spectrum of activity against both Gram-positive and Gram-negative bacteria. Also has antimicrobial activity against S.cerevisiae. Has insecticidal and non-hemolytic activity. In Neoponera inversa (Ant), this protein is U1-poneritoxin-Ni3a.